Here is a 278-residue protein sequence, read N- to C-terminus: Digeranylgeranylglyceryl phosphate synthase (278 aa).

8 helical membrane-spanning segments follow: residues 17–37, 40–60, 91–111, 129–149, 153–173, 204–224, 226–246, and 257–277; these read MASF…LEMV, LIFA…LNDI, LLVF…LMAV, IIGN…GGIA, IDVT…REII, LLLV…FFGI, YLIS…PLLI, and SRNI…GSFF.

This sequence belongs to the UbiA prenyltransferase family. DGGGP synthase subfamily. Requires Mg(2+) as cofactor.

It is found in the cell membrane. The catalysed reaction is sn-3-O-(geranylgeranyl)glycerol 1-phosphate + (2E,6E,10E)-geranylgeranyl diphosphate = 2,3-bis-O-(geranylgeranyl)-sn-glycerol 1-phosphate + diphosphate. It participates in membrane lipid metabolism; glycerophospholipid metabolism. Its function is as follows. Prenyltransferase that catalyzes the transfer of the geranylgeranyl moiety of geranylgeranyl diphosphate (GGPP) to the C2 hydroxyl of (S)-3-O-geranylgeranylglyceryl phosphate (GGGP). This reaction is the second ether-bond-formation step in the biosynthesis of archaeal membrane lipids. In Methanococcus maripaludis (strain C5 / ATCC BAA-1333), this protein is Digeranylgeranylglyceryl phosphate synthase.